Consider the following 292-residue polypeptide: 4-hydroxy-tetrahydrodipicolinate synthase (292 aa).

Thr45 serves as a coordination point for pyruvate. Tyr133 acts as the Proton donor/acceptor in catalysis. The active-site Schiff-base intermediate with substrate is Lys161. Ile203 lines the pyruvate pocket.

This sequence belongs to the DapA family. In terms of assembly, homodimer.

It is found in the cytoplasm. It carries out the reaction L-aspartate 4-semialdehyde + pyruvate = (2S,4S)-4-hydroxy-2,3,4,5-tetrahydrodipicolinate + H2O + H(+). It participates in amino-acid biosynthesis; L-lysine biosynthesis via DAP pathway; (S)-tetrahydrodipicolinate from L-aspartate: step 3/4. In terms of biological role, catalyzes the condensation of (S)-aspartate-beta-semialdehyde [(S)-ASA] and pyruvate to 4-hydroxy-tetrahydrodipicolinate (HTPA). The protein is 4-hydroxy-tetrahydrodipicolinate synthase of Pseudomonas putida (strain W619).